We begin with the raw amino-acid sequence, 167 residues long: uncharacterized protein (167 aa).

This is an uncharacterized protein from Escherichia coli (strain K12).